Reading from the N-terminus, the 354-residue chain is Methylthioribose-1-phosphate isomerase (354 aa).

Substrate-binding positions include 58–60, Arg-101, and Gln-204; that span reads RGA. The active-site Proton donor is the Asp-245. 255 to 256 contributes to the substrate binding site; it reads NK.

The protein belongs to the eIF-2B alpha/beta/delta subunits family. MtnA subfamily.

It catalyses the reaction 5-(methylsulfanyl)-alpha-D-ribose 1-phosphate = 5-(methylsulfanyl)-D-ribulose 1-phosphate. It participates in amino-acid biosynthesis; L-methionine biosynthesis via salvage pathway; L-methionine from S-methyl-5-thio-alpha-D-ribose 1-phosphate: step 1/6. Catalyzes the interconversion of methylthioribose-1-phosphate (MTR-1-P) into methylthioribulose-1-phosphate (MTRu-1-P). The sequence is that of Methylthioribose-1-phosphate isomerase from Xylella fastidiosa (strain M12).